The sequence spans 1452 residues: CLIP-associating protein 1 (1452 aa).

HEAT repeat units lie at residues 68–87 (LLGMDILSALVTRLQDRFRS), 88–124 (QIGTVLPSLMDRLGDAKDSVREQDQNLLIKIMEQASN), and 163–200 (LTLSKIVPHICNLLGDPNSQVRDAAINCLVEIYRHVGE). The disordered stretch occupies residues 239–299 (KNFDDEDSVD…GTAKEGAGGV (61 aa)). Positions 253–267 (SSASSSASSKAPQAA) are enriched in low complexity. HEAT repeat units lie at residues 407-442 (HGAEAIMPTVFNLVPNSAKIMATSGVVAIRLIIRQT) and 443-479 (HVPRLIPIITSNCTSKSVAVRRRCYEFLDLLLQEWQT). Disordered regions lie at residues 545-735 (SDSI…GISQ) and 771-792 (YGMYSDDDANSDASSACSERSY). A compositionally biased stretch (low complexity) spans 550 to 569 (SLPQSDRSSSSSQESLNRPL). Positions 573–597 (RSPTGSTVSRASTATSKSTPGSLQR) are enriched in polar residues. 3 stretches are compositionally biased toward low complexity: residues 606 to 621 (AATCAKSKATSGASAA), 645 to 659 (QSSGSTTSTASTPAD), and 668 to 682 (VVSQSQPGSRSSSPG). Over residues 715–724 (QGCSRETSPS) the composition is skewed to polar residues. A compositionally biased stretch (low complexity) spans 781-792 (SDASSACSERSY). The stretch at 926 to 963 (QQFNILMRFIVDQTQTPNLKVKVAILKYIESLARQMDP) is one HEAT 6 repeat. Residues 1033–1076 (LKNSSNSSMGSPSNTIGRTPSRHSSSRASPLTSPTNCSHGGLSP) are disordered. Residues 1034–1046 (KNSSNSSMGSPSN) show a composition bias toward low complexity. The span at 1058–1070 (SRASPLTSPTNCS) shows a compositional bias: polar residues. 2 HEAT repeats span residues 1256–1293 (EHFKTILLLLLETLGDKDHAIRALALRVLREILRNQPA) and 1374–1411 (QILPDIIPGLLQGYDNTESSVRKASVFCLVAIYSVIGE).

The protein belongs to the CLASP family. As to quaternary structure, interacts (via C-terminus) with clip1/clip-170, and cenpe.

It localises to the cytoplasm. It is found in the cytoskeleton. Its subcellular location is the microtubule organizing center. The protein resides in the centrosome. The protein localises to the chromosome. It localises to the centromere. It is found in the kinetochore. Its subcellular location is the spindle. The protein resides in the golgi apparatus. The protein localises to the trans-Golgi network. Its function is as follows. Microtubule plus-end tracking protein that promotes the stabilization of dynamic microtubules during anaphase. Plays a crucial role in chromatin-induced microtubule formation. May also act at microtubule minus ends. May be involved in the nucleation of noncentrosomal microtubules originating from the trans-Golgi network (TGN). The polypeptide is CLIP-associating protein 1 (Xenopus tropicalis (Western clawed frog)).